We begin with the raw amino-acid sequence, 725 residues long: Ribosomal RNA large subunit methyltransferase K/L (725 aa).

The THUMP domain occupies 46–157 (VAYRLCLWSR…RGQATLSLDL (112 aa)). Residues 393 to 412 (TGERGERNDDGQARAPSEPA) are disordered. Positions 395 to 404 (ERGERNDDGQ) are enriched in basic and acidic residues.

Belongs to the methyltransferase superfamily. RlmKL family.

Its subcellular location is the cytoplasm. The enzyme catalyses guanosine(2445) in 23S rRNA + S-adenosyl-L-methionine = N(2)-methylguanosine(2445) in 23S rRNA + S-adenosyl-L-homocysteine + H(+). It catalyses the reaction guanosine(2069) in 23S rRNA + S-adenosyl-L-methionine = N(2)-methylguanosine(2069) in 23S rRNA + S-adenosyl-L-homocysteine + H(+). Its function is as follows. Specifically methylates the guanine in position 2445 (m2G2445) and the guanine in position 2069 (m7G2069) of 23S rRNA. This chain is Ribosomal RNA large subunit methyltransferase K/L, found in Pseudomonas paraeruginosa (strain DSM 24068 / PA7) (Pseudomonas aeruginosa (strain PA7)).